A 250-amino-acid polypeptide reads, in one-letter code: Ribosomal RNA small subunit methyltransferase J (250 aa).

S-adenosyl-L-methionine is bound by residues 96–97 (RD) and Asp-168.

It belongs to the methyltransferase superfamily. RsmJ family.

Its subcellular location is the cytoplasm. It catalyses the reaction guanosine(1516) in 16S rRNA + S-adenosyl-L-methionine = N(2)-methylguanosine(1516) in 16S rRNA + S-adenosyl-L-homocysteine + H(+). In terms of biological role, specifically methylates the guanosine in position 1516 of 16S rRNA. This chain is Ribosomal RNA small subunit methyltransferase J, found in Neisseria meningitidis serogroup C / serotype 2a (strain ATCC 700532 / DSM 15464 / FAM18).